A 211-amino-acid chain; its full sequence is Allatostatins MIP (211 aa).

The signal sequence occupies residues 1 to 24; the sequence is MAHTKTRRTYGFLMVLLILGSACG. Positions 25-63 are excised as a propeptide; that stretch reads NLVASGSAGSPPSNEPGGGGLSEQVVLDQLSESDLYGNN. W74 is modified (tryptophan amide). Residues 78 to 148 constitute a propeptide that is removed on maturation; that stretch reads SSSGDVSDPD…DDLAGEPDVE (71 aa). Residues 115–135 show a composition bias toward low complexity; that stretch reads ASGQSAQQQQQQPLQQQSQSG. A disordered region spans residues 115–142; that stretch reads ASGQSAQQQQQQPLQQQSQSGEDFDDLA. Tryptophan amide occurs at positions 159, 175, 189, and 202. The interval 168–190 is disordered; it reads WNKFRGAWGKREPTWNNLKGMWG. Residues 206-211 constitute a propeptide that is removed on maturation; that stretch reads SQLPSN.

In terms of tissue distribution, in larvae, strongly expressed in the midgut region before and in between the copper cells, and in a group of cells in the posterior part of the larval midgut. Expressed in the neurons of many areas including the subesophageal ganglion/tritocerebrum (SOG), olfactory glomeruli, lateral ventral protocerebrum, mushroom body, the optic lobe medulla and in the antennal lobes.

It is found in the secreted. Functionally, ligand for the sex peptide receptor (SPR). Stabilizes sleep and maintains sleep homeostasis to inhibit the activity of wake-promoting circuits, such as those that involve the pigment dispersing factor (pdf) neurons. Regulated by the circadian clock network and pathways associated with a sleep homeostat. May also have a regulatory role in gut motility. The sequence is that of Allatostatins MIP (Mip) from Drosophila melanogaster (Fruit fly).